A 329-amino-acid polypeptide reads, in one-letter code: Malate dehydrogenase (329 aa).

12 to 18 (GAAGQIC) provides a ligand contact to NAD(+). Substrate is bound by residues R95 and R101. NAD(+) is bound by residues N108, Q115, and 132 to 134 (VGN). Positions 134 and 165 each coordinate substrate. H190 serves as the catalytic Proton acceptor.

This sequence belongs to the LDH/MDH superfamily. MDH type 2 family. In terms of assembly, homodimer.

It carries out the reaction (S)-malate + NAD(+) = oxaloacetate + NADH + H(+). In terms of biological role, catalyzes the reversible oxidation of malate to oxaloacetate. This chain is Malate dehydrogenase, found in Aquaspirillum arcticum.